A 228-amino-acid polypeptide reads, in one-letter code: PKHD-type hydroxylase xcc-b100_1388 (228 aa).

A Fe2OG dioxygenase domain is found at 78 to 180; the sequence is RIYPPLFNRY…RVASFFWIQS (103 aa). Positions 96, 98, and 161 each coordinate Fe cation. Arg-171 serves as a coordination point for 2-oxoglutarate.

Fe(2+) is required as a cofactor. The cofactor is L-ascorbate.

The polypeptide is PKHD-type hydroxylase xcc-b100_1388 (Xanthomonas campestris pv. campestris (strain B100)).